Consider the following 406-residue polypeptide: Argininosuccinate synthase (406 aa).

ATP is bound by residues 10 to 18 and Ala-37; that span reads AYSGGLDTS. L-citrulline contacts are provided by Tyr-88 and Ser-93. Gly-118 provides a ligand contact to ATP. Positions 120, 124, and 125 each coordinate L-aspartate. Asn-124 serves as a coordination point for L-citrulline. L-citrulline is bound by residues Arg-128, Ser-179, Ser-188, Glu-264, and Tyr-276.

The protein belongs to the argininosuccinate synthase family. Type 1 subfamily. Homotetramer.

It is found in the cytoplasm. It catalyses the reaction L-citrulline + L-aspartate + ATP = 2-(N(omega)-L-arginino)succinate + AMP + diphosphate + H(+). It functions in the pathway amino-acid biosynthesis; L-arginine biosynthesis; L-arginine from L-ornithine and carbamoyl phosphate: step 2/3. The chain is Argininosuccinate synthase from Azotobacter vinelandii (strain DJ / ATCC BAA-1303).